The primary structure comprises 416 residues: UDP-N-acetylglucosamine 1-carboxyvinyltransferase (416 aa).

Phosphoenolpyruvate is bound at residue K22 to N23. R92 provides a ligand contact to UDP-N-acetyl-alpha-D-glucosamine. The active-site Proton donor is the C116. 2-(S-cysteinyl)pyruvic acid O-phosphothioketal is present on C116. UDP-N-acetyl-alpha-D-glucosamine is bound by residues R121–Q125, D304, and I326.

The protein belongs to the EPSP synthase family. MurA subfamily.

The protein resides in the cytoplasm. The catalysed reaction is phosphoenolpyruvate + UDP-N-acetyl-alpha-D-glucosamine = UDP-N-acetyl-3-O-(1-carboxyvinyl)-alpha-D-glucosamine + phosphate. The protein operates within cell wall biogenesis; peptidoglycan biosynthesis. In terms of biological role, cell wall formation. Adds enolpyruvyl to UDP-N-acetylglucosamine. This chain is UDP-N-acetylglucosamine 1-carboxyvinyltransferase, found in Aromatoleum aromaticum (strain DSM 19018 / LMG 30748 / EbN1) (Azoarcus sp. (strain EbN1)).